Reading from the N-terminus, the 240-residue chain is 1-(5-phosphoribosyl)-5-[(5-phosphoribosylamino)methylideneamino] imidazole-4-carboxamide isomerase (240 aa).

The Proton acceptor role is filled by Asp8. Asp129 acts as the Proton donor in catalysis.

This sequence belongs to the HisA/HisF family.

It localises to the cytoplasm. It carries out the reaction 1-(5-phospho-beta-D-ribosyl)-5-[(5-phospho-beta-D-ribosylamino)methylideneamino]imidazole-4-carboxamide = 5-[(5-phospho-1-deoxy-D-ribulos-1-ylimino)methylamino]-1-(5-phospho-beta-D-ribosyl)imidazole-4-carboxamide. It functions in the pathway amino-acid biosynthesis; L-histidine biosynthesis; L-histidine from 5-phospho-alpha-D-ribose 1-diphosphate: step 4/9. The protein is 1-(5-phosphoribosyl)-5-[(5-phosphoribosylamino)methylideneamino] imidazole-4-carboxamide isomerase of Caldanaerobacter subterraneus subsp. tengcongensis (strain DSM 15242 / JCM 11007 / NBRC 100824 / MB4) (Thermoanaerobacter tengcongensis).